A 227-amino-acid polypeptide reads, in one-letter code: Cytidylate kinase (227 aa).

Residue glycine 12–threonine 20 participates in ATP binding.

This sequence belongs to the cytidylate kinase family. Type 1 subfamily.

The protein resides in the cytoplasm. It carries out the reaction CMP + ATP = CDP + ADP. The catalysed reaction is dCMP + ATP = dCDP + ADP. This chain is Cytidylate kinase, found in Sodalis glossinidius (strain morsitans).